Reading from the N-terminus, the 264-residue chain is uncharacterized protein (264 aa).

Transmembrane regions (helical) follow at residues 19–39, 42–62, 69–89, 100–120, 136–156, 160–180, 192–212, and 223–243; these read LFPAVIFASLAITQIIPLPFL, YDWLLIICVLMQLWMVRSGLE, VITLFHLIGLALELFKVHMGS, IFGVPLYSGFMYASVASYLCQ, FAVVPLAAAIYLNFFTHHFSI, WWLSGLVIIVFWQTWVTYEVN, FILIGFFIWIAENIATFFGAW, and LVHLGKVSSWLLLVIVSFLIV.

Its subcellular location is the cell membrane. This is an uncharacterized protein from Bacillus subtilis (strain 168).